Reading from the N-terminus, the 252-residue chain is Type II secretion system protein N (252 aa).

Residues 1 to 4 are Cytoplasmic-facing; the sequence is MKRA. A helical transmembrane segment spans residues 5-25; the sequence is VGYGLLFSTVLMTSVVVHLPA. Over 26–252 the chain is Periplasmic; sequence QVALSPLPLP…RYPFNQQGQL (227 aa).

Belongs to the GSP N family.

The protein resides in the cell inner membrane. Involved in a type II secretion system (T2SS, formerly general secretion pathway, GSP) for the export of proteins. Required for secretion of cholera toxin through the outer membrane. This is Type II secretion system protein N (epsN) from Vibrio cholerae serotype O1 (strain ATCC 39315 / El Tor Inaba N16961).